The primary structure comprises 313 residues: Beta-ketoacyl-[acyl-carrier-protein] synthase III (313 aa).

Residues Cys-112 and His-238 contribute to the active site. Residues Gln-239–Arg-243 are ACP-binding. Asn-268 is an active-site residue.

Belongs to the thiolase-like superfamily. FabH family. In terms of assembly, homodimer.

It localises to the cytoplasm. It catalyses the reaction malonyl-[ACP] + acetyl-CoA + H(+) = 3-oxobutanoyl-[ACP] + CO2 + CoA. Its pathway is lipid metabolism; fatty acid biosynthesis. Catalyzes the condensation reaction of fatty acid synthesis by the addition to an acyl acceptor of two carbons from malonyl-ACP. Catalyzes the first condensation reaction which initiates fatty acid synthesis and may therefore play a role in governing the total rate of fatty acid production. Possesses both acetoacetyl-ACP synthase and acetyl transacylase activities. Its substrate specificity determines the biosynthesis of branched-chain and/or straight-chain of fatty acids. In Staphylococcus aureus (strain bovine RF122 / ET3-1), this protein is Beta-ketoacyl-[acyl-carrier-protein] synthase III.